The sequence spans 285 residues: Sulfoquinovosyl glycerol transport system permease protein SmoH (285 aa).

Transmembrane regions (helical) follow at residues 21-41 (FIAA…ILFT), 83-103 (FMVA…AAYA), 115-135 (ILSL…VPLF), 150-170 (LILP…VSFF), 195-215 (VVVP…FVNA), and 250-270 (PVIS…IVIF). One can recognise an ABC transmembrane type-1 domain in the interval 79–270 (LFNSFMVALL…VPVAILIVIF (192 aa)).

It belongs to the binding-protein-dependent transport system permease family. In terms of assembly, the complex is probably composed of two ATP-binding proteins (SmoE), two transmembrane proteins (SmoG and SmoH) and a solute-binding protein (SmoF).

The protein localises to the cell inner membrane. Functionally, part of the ABC transporter complex SmoEFGH involved in sulfoquinovosyl glycerol (SQGro) uptake. Responsible for the translocation of the substrate across the membrane. The sequence is that of Sulfoquinovosyl glycerol transport system permease protein SmoH from Agrobacterium fabrum (strain C58 / ATCC 33970) (Agrobacterium tumefaciens (strain C58)).